We begin with the raw amino-acid sequence, 425 residues long: Putative dipeptidase MGYG_00085 (425 aa).

The signal sequence occupies residues 1-31 (MAPERRSRLSETAGLFVSLLALTSIVPVQAV). Positions 56, 58, and 168 each coordinate Zn(2+). A disulfide bridge links Cys107 with Cys197. Position 195 (His195) interacts with substrate. Zn(2+) is bound by residues His239 and His260. Residues Arg271 and Asp331 each coordinate substrate. Asn403 is a glycosylation site (N-linked (GlcNAc...) asparagine).

This sequence belongs to the metallo-dependent hydrolases superfamily. Peptidase M19 family. Zn(2+) is required as a cofactor.

The catalysed reaction is an L-aminoacyl-L-amino acid + H2O = 2 an L-alpha-amino acid. In terms of biological role, hydrolyzes a wide range of dipeptides. The polypeptide is Putative dipeptidase MGYG_00085 (Arthroderma gypseum (strain ATCC MYA-4604 / CBS 118893) (Microsporum gypseum)).